We begin with the raw amino-acid sequence, 126 residues long: Hydrogenase maturation factor HypA (126 aa).

His2 lines the Ni(2+) pocket. Residues Cys78, Cys81, Cys97, and Cys100 each contribute to the Zn(2+) site.

It belongs to the HypA/HybF family.

In terms of biological role, involved in the maturation of [NiFe] hydrogenases. Required for nickel insertion into the metal center of the hydrogenase. The chain is Hydrogenase maturation factor HypA from Methanococcus maripaludis (strain DSM 14266 / JCM 13030 / NBRC 101832 / S2 / LL).